Consider the following 222-residue polypeptide: Octanoyltransferase (222 aa).

The region spanning 34-214 (GEAPSTVLLL…EFRKHEEALV (181 aa)) is the BPL/LPL catalytic domain. Substrate contacts are provided by residues 72 to 79 (RGGKLTWH), 144 to 146 (AIG), and 157 to 159 (GVA). Residue cysteine 175 is the Acyl-thioester intermediate of the active site.

The protein belongs to the LipB family.

It localises to the cytoplasm. The enzyme catalyses octanoyl-[ACP] + L-lysyl-[protein] = N(6)-octanoyl-L-lysyl-[protein] + holo-[ACP] + H(+). Its pathway is protein modification; protein lipoylation via endogenous pathway; protein N(6)-(lipoyl)lysine from octanoyl-[acyl-carrier-protein]: step 1/2. Its function is as follows. Catalyzes the transfer of endogenously produced octanoic acid from octanoyl-acyl-carrier-protein onto the lipoyl domains of lipoate-dependent enzymes. Lipoyl-ACP can also act as a substrate although octanoyl-ACP is likely to be the physiological substrate. This Pseudarthrobacter chlorophenolicus (strain ATCC 700700 / DSM 12829 / CIP 107037 / JCM 12360 / KCTC 9906 / NCIMB 13794 / A6) (Arthrobacter chlorophenolicus) protein is Octanoyltransferase.